The sequence spans 346 residues: Probable aldo-keto reductase 2 (346 aa).

Tyr63 functions as the Proton donor in the catalytic mechanism. His131 is a substrate binding site. Position 210-220 (210-220 (SPLGRGFLAAG)) interacts with NADP(+).

The protein belongs to the aldo/keto reductase family. Aldo/keto reductase 13 subfamily.

In Arabidopsis thaliana (Mouse-ear cress), this protein is Probable aldo-keto reductase 2 (AGD2).